A 351-amino-acid chain; its full sequence is Putative glycosyltransferase 45 (351 aa).

Belongs to the glycosyltransferase group 1 family.

In Sulfolobus islandicus filamentous virus (isolate Iceland/Hveragerdi) (SIFV), this protein is Putative glycosyltransferase 45 (SIFV0045).